The chain runs to 182 residues: MKEQEIQENMNKSIEATQRNFNTIRTGRANASLLDRISVEYYGAETPIKSLATISTVDSQTISIQPFDISCLQAIEKSISMSDLGITPNNDGKVIRINVPPLTEERRKEFCKLASKYAEEGKVALRNIRRDAVDKEKKDEKDGLISIDESRDNQSEIQKITNKFIALIETKLSEKEKEILKV.

It belongs to the RRF family.

The protein localises to the cytoplasm. In terms of biological role, responsible for the release of ribosomes from messenger RNA at the termination of protein biosynthesis. May increase the efficiency of translation by recycling ribosomes from one round of translation to another. This Prochlorococcus marinus (strain MIT 9312) protein is Ribosome-recycling factor.